We begin with the raw amino-acid sequence, 360 residues long: 3-dehydroquinate synthase (360 aa).

NAD(+)-binding positions include 71–76, 105–109, 129–130, lysine 142, lysine 151, and 169–172; these read DGEQYK, GVVGD, TT, and TLNT. Positions 184, 248, and 265 each coordinate Zn(2+).

This sequence belongs to the sugar phosphate cyclases superfamily. Dehydroquinate synthase family. Co(2+) serves as cofactor. Requires Zn(2+) as cofactor. It depends on NAD(+) as a cofactor.

It is found in the cytoplasm. The catalysed reaction is 7-phospho-2-dehydro-3-deoxy-D-arabino-heptonate = 3-dehydroquinate + phosphate. It functions in the pathway metabolic intermediate biosynthesis; chorismate biosynthesis; chorismate from D-erythrose 4-phosphate and phosphoenolpyruvate: step 2/7. Functionally, catalyzes the conversion of 3-deoxy-D-arabino-heptulosonate 7-phosphate (DAHP) to dehydroquinate (DHQ). In Coxiella burnetii (strain CbuK_Q154) (Coxiella burnetii (strain Q154)), this protein is 3-dehydroquinate synthase.